The chain runs to 387 residues: Protein WHAT'S THIS FACTOR 9, mitochondrial (387 aa).

Residues 1 to 24 constitute a mitochondrion transit peptide; the sequence is MLSIRRHAKTVASSCTNLTQKRTY. One can recognise a PORR domain in the interval 32-358; the sequence is KRDPYFDNIE…KKYIQLMKNS (327 aa).

The protein localises to the mitochondrion. In terms of biological role, RNA-binding protein involved in group II intron splicing. Binds specific group II introns and promotes their splicing (e.g. rpl2 and ccmFC). This is Protein WHAT'S THIS FACTOR 9, mitochondrial from Arabidopsis thaliana (Mouse-ear cress).